The sequence spans 148 residues: Deoxyuridine 5'-triphosphate nucleotidohydrolase (148 aa).

Residues 68–70, Asn81, 85–87, and Lys95 each bind substrate; these read RSG and TID.

Belongs to the dUTPase family. Mg(2+) is required as a cofactor.

It carries out the reaction dUTP + H2O = dUMP + diphosphate + H(+). It functions in the pathway pyrimidine metabolism; dUMP biosynthesis; dUMP from dCTP (dUTP route): step 2/2. Functionally, this enzyme is involved in nucleotide metabolism: it produces dUMP, the immediate precursor of thymidine nucleotides and it decreases the intracellular concentration of dUTP so that uracil cannot be incorporated into DNA. This chain is Deoxyuridine 5'-triphosphate nucleotidohydrolase, found in Rickettsia rickettsii (strain Iowa).